The following is an 859-amino-acid chain: Collagen alpha-1(II) chain (859 aa).

The interval Leu-1–Pro-607 is disordered. A 4-hydroxyproline mark is found at Pro-31 and Pro-40. A 3-hydroxyproline modification is found at Pro-42. A 4-hydroxyproline mark is found at Pro-43 and Pro-46. The segment covering Glu-78 to Gln-121 has biased composition (low complexity). Residues Lys-136–Pro-147 show a composition bias toward basic and acidic residues. 2 stretches are compositionally biased toward low complexity: residues Pro-204–Lys-220 and Pro-249–Val-277. At Pro-279 the chain carries 3-hydroxyproline. Positions Pro-279–Pro-292 are enriched in pro residues. 4-hydroxyproline occurs at positions 280, 286, and 292. Residues Asp-306–Pro-321 show a composition bias toward low complexity. Positions Arg-487 to Leu-501 are enriched in basic and acidic residues. The interval Gly-491–Pro-586 is triple-helical region. Pro-516 carries the 3-hydroxyproline modification. Residues Ser-520–Ala-529 show a composition bias toward low complexity. The residue at position 553 (Pro-553) is a 4-hydroxyproline. Pro-558 carries the post-translational modification 3-hydroxyproline. 4-hydroxyproline is present on Pro-559. The segment covering Pro-570–Pro-586 has biased composition (pro residues). Pro-573 carries the post-translational modification 3-hydroxyproline. Pro-574 and Pro-577 each carry 4-hydroxyproline. Position 579 is a 3-hydroxyproline (Pro-579). 2 positions are modified to 4-hydroxyproline: Pro-580 and Pro-583. Pro-585 carries the post-translational modification 3-hydroxyproline. Residue Pro-586 is modified to 4-hydroxyproline. Positions Gly-587 to Ala-613 are nonhelical region (C-terminal). The propeptide at Asp-614–Leu-859 is C-terminal propeptide. Residues Val-625–Leu-859 form the Fibrillar collagen NC1 domain. 3 disulfides stabilise this stretch: Cys-655–Cys-687, Cys-695–Cys-857, and Cys-765–Cys-810. Ca(2+) contacts are provided by Asp-673, Asn-675, Gln-676, Cys-678, and Asp-681. Asn-760 is a glycosylation site (N-linked (GlcNAc...) asparagine).

The protein belongs to the fibrillar collagen family. In terms of assembly, homotrimers of alpha 1(II) chains. In terms of processing, contains mostly 4-hydroxyproline. Prolines at the third position of the tripeptide repeating unit (G-X-P) are 4-hydroxylated in some or all of the chains. Post-translationally, contains 3-hydroxyproline at a few sites. This modification occurs on the first proline residue in the sequence motif Gly-Pro-Hyp, where Hyp is 4-hydroxyproline. Lysine residues at the third position of the tripeptide repeating unit (G-X-Y) are 5-hydroxylated in some or all of the chains. In terms of processing, O-glycosylated on hydroxylated lysine residues. The O-linked glycan consists of a Glc-Gal disaccharide.

It localises to the secreted. It is found in the extracellular space. The protein localises to the extracellular matrix. Functionally, type II collagen is specific for cartilaginous tissues. It is essential for the normal embryonic development of the skeleton, for linear growth and for the ability of cartilage to resist compressive forces. The polypeptide is Collagen alpha-1(II) chain (Gallus gallus (Chicken)).